The following is a 338-amino-acid chain: Ornithine carbamoyltransferase, catabolic (338 aa).

Carbamoyl phosphate contacts are provided by residues 58–61 (STRT), Gln85, Arg109, and 136–139 (HPTQ). L-ornithine contacts are provided by residues Asn168, Asp232, and 236-237 (SM). Residues 273–274 (CL) and Arg318 contribute to the carbamoyl phosphate site.

It belongs to the aspartate/ornithine carbamoyltransferase superfamily. OTCase family.

It localises to the cytoplasm. It carries out the reaction carbamoyl phosphate + L-ornithine = L-citrulline + phosphate + H(+). Its pathway is amino-acid degradation; L-arginine degradation via ADI pathway; carbamoyl phosphate from L-arginine: step 2/2. Its function is as follows. Reversibly catalyzes the transfer of the carbamoyl group from carbamoyl phosphate (CP) to the N(epsilon) atom of ornithine (ORN) to produce L-citrulline. The sequence is that of Ornithine carbamoyltransferase, catabolic from Streptococcus gordonii (strain Challis / ATCC 35105 / BCRC 15272 / CH1 / DL1 / V288).